The sequence spans 244 residues: Phosphoadenosine 5'-phosphosulfate reductase (244 aa).

C239 serves as the catalytic Nucleophile; cysteine thiosulfonate intermediate.

This sequence belongs to the PAPS reductase family. CysH subfamily.

The protein resides in the cytoplasm. The catalysed reaction is [thioredoxin]-disulfide + sulfite + adenosine 3',5'-bisphosphate + 2 H(+) = [thioredoxin]-dithiol + 3'-phosphoadenylyl sulfate. Its pathway is sulfur metabolism; hydrogen sulfide biosynthesis; sulfite from sulfate: step 3/3. Catalyzes the formation of sulfite from phosphoadenosine 5'-phosphosulfate (PAPS) using thioredoxin as an electron donor. The chain is Phosphoadenosine 5'-phosphosulfate reductase from Escherichia coli O6:K15:H31 (strain 536 / UPEC).